The primary structure comprises 660 residues: Acetyl-coenzyme A synthetase (660 aa).

Residues 197-200 and Thr-317 contribute to the CoA site; that span reads RGGK. ATP is bound by residues 397-399, 421-426, Asp-512, and Arg-528; these read GEP and DTFWQT. Ser-536 is a CoA binding site. Arg-539 lines the ATP pocket. Positions 550 and 555 each coordinate Mg(2+). Lys-625 bears the N6-acetyllysine mark.

It belongs to the ATP-dependent AMP-binding enzyme family. The cofactor is Mg(2+). Post-translationally, acetylated. Deacetylation by the SIR2-homolog deacetylase activates the enzyme.

It carries out the reaction acetate + ATP + CoA = acetyl-CoA + AMP + diphosphate. Catalyzes the conversion of acetate into acetyl-CoA (AcCoA), an essential intermediate at the junction of anabolic and catabolic pathways. AcsA undergoes a two-step reaction. In the first half reaction, AcsA combines acetate with ATP to form acetyl-adenylate (AcAMP) intermediate. In the second half reaction, it can then transfer the acetyl group from AcAMP to the sulfhydryl group of CoA, forming the product AcCoA. The protein is Acetyl-coenzyme A synthetase of Herminiimonas arsenicoxydans.